The primary structure comprises 273 residues: Dermonecrotic toxin LsaSicTox-alphaIB1bii (273 aa).

The active site involves H5. The Mg(2+) site is built by E25 and D27. The active-site Nucleophile is H41. 2 disulfide bridges follow: C45–C51 and C47–C190. Mg(2+) is bound at residue D85.

It belongs to the arthropod phospholipase D family. Class II subfamily. Mg(2+) is required as a cofactor. As to expression, expressed by the venom gland.

It localises to the secreted. The catalysed reaction is an N-(acyl)-sphingosylphosphocholine = an N-(acyl)-sphingosyl-1,3-cyclic phosphate + choline. It carries out the reaction an N-(acyl)-sphingosylphosphoethanolamine = an N-(acyl)-sphingosyl-1,3-cyclic phosphate + ethanolamine. It catalyses the reaction a 1-acyl-sn-glycero-3-phosphocholine = a 1-acyl-sn-glycero-2,3-cyclic phosphate + choline. The enzyme catalyses a 1-acyl-sn-glycero-3-phosphoethanolamine = a 1-acyl-sn-glycero-2,3-cyclic phosphate + ethanolamine. Dermonecrotic toxins cleave the phosphodiester linkage between the phosphate and headgroup of certain phospholipids (sphingolipid and lysolipid substrates), forming an alcohol (often choline) and a cyclic phosphate. This toxin acts on sphingomyelin (SM). It may also act on ceramide phosphoethanolamine (CPE), lysophosphatidylcholine (LPC) and lysophosphatidylethanolamine (LPE), but not on lysophosphatidylserine (LPS), and lysophosphatidylglycerol (LPG). It acts by transphosphatidylation, releasing exclusively cyclic phosphate products as second products. Induces dermonecrosis, hemolysis, increased vascular permeability, edema, inflammatory response, and platelet aggregation. This is Dermonecrotic toxin LsaSicTox-alphaIB1bii from Loxosceles sabina (Tucson recluse spider).